Reading from the N-terminus, the 247-residue chain is ATP synthase subunit a, chloroplastic (247 aa).

Helical transmembrane passes span 38–58 (QVLITSWVVIAILLISTILVV), 95–115 (VPFIGTLFLFIFVSNWSGALL), 134–154 (INTTVALALLTSVAYFYAGIS), 199–219 (LVVVVLVSLVPLVIPIPVMFL), and 220–240 (GLFTSGIQALIFATLAAAYIG).

It belongs to the ATPase A chain family. F-type ATPases have 2 components, CF(1) - the catalytic core - and CF(0) - the membrane proton channel. CF(1) has five subunits: alpha(3), beta(3), gamma(1), delta(1), epsilon(1). CF(0) has four main subunits: a, b, b' and c.

It is found in the plastid. Its subcellular location is the chloroplast thylakoid membrane. Key component of the proton channel; it plays a direct role in the translocation of protons across the membrane. The sequence is that of ATP synthase subunit a, chloroplastic from Cicer arietinum (Chickpea).